The chain runs to 303 residues: Glutamyl-Q tRNA(Asp) synthetase (303 aa).

L-glutamate contacts are provided by residues Arg-16–Ser-20 and Glu-52. Positions Pro-19–Ser-29 match the 'HIGH' region motif. Cys-108, Cys-110, Tyr-122, and Cys-126 together coordinate Zn(2+). Tyr-177 and Arg-195 together coordinate L-glutamate. The 'KMSKS' region motif lies at Lys-233–Gln-237. Lys-236 serves as a coordination point for ATP.

It belongs to the class-I aminoacyl-tRNA synthetase family. GluQ subfamily. Zn(2+) is required as a cofactor.

Functionally, catalyzes the tRNA-independent activation of glutamate in presence of ATP and the subsequent transfer of glutamate onto a tRNA(Asp). Glutamate is transferred on the 2-amino-5-(4,5-dihydroxy-2-cyclopenten-1-yl) moiety of the queuosine in the wobble position of the QUC anticodon. In Vibrio vulnificus (strain CMCP6), this protein is Glutamyl-Q tRNA(Asp) synthetase.